The chain runs to 220 residues: Uracil-DNA glycosylase (220 aa).

The Proton acceptor role is filled by aspartate 60.

The protein belongs to the uracil-DNA glycosylase (UDG) superfamily. UNG family.

Its subcellular location is the cytoplasm. The enzyme catalyses Hydrolyzes single-stranded DNA or mismatched double-stranded DNA and polynucleotides, releasing free uracil.. Its function is as follows. Excises uracil residues from the DNA which can arise as a result of misincorporation of dUMP residues by DNA polymerase or due to deamination of cytosine. In Francisella tularensis subsp. tularensis (strain FSC 198), this protein is Uracil-DNA glycosylase.